The primary structure comprises 291 residues: Transcription antitermination protein NusB (291 aa).

This sequence belongs to the NusB family.

Its function is as follows. Involved in transcription antitermination. Required for transcription of ribosomal RNA (rRNA) genes. Binds specifically to the boxA antiterminator sequence of the ribosomal RNA (rrn) operons. This chain is Transcription antitermination protein NusB, found in Synechococcus sp. (strain JA-2-3B'a(2-13)) (Cyanobacteria bacterium Yellowstone B-Prime).